The following is a 346-amino-acid chain: NADH-ubiquinone oxidoreductase chain 2 (346 aa).

10 helical membrane passes run 25-45 (HWVL…PLIS), 60-80 (FLTQ…NAWA), 95-115 (CLLL…HFWF), 124-144 (LMTA…LLLM), 149-169 (LNPA…GWMG), 178-195 (ILAF…IILV), 200-219 (LALL…FMAL), 247-267 (VLLS…WLII), 274-294 (EMTP…FFYL), and 326-346 (AILA…HAIV).

Belongs to the complex I subunit 2 family.

The protein localises to the mitochondrion inner membrane. It carries out the reaction a ubiquinone + NADH + 5 H(+)(in) = a ubiquinol + NAD(+) + 4 H(+)(out). Functionally, core subunit of the mitochondrial membrane respiratory chain NADH dehydrogenase (Complex I) that is believed to belong to the minimal assembly required for catalysis. Complex I functions in the transfer of electrons from NADH to the respiratory chain. The immediate electron acceptor for the enzyme is believed to be ubiquinone. The chain is NADH-ubiquinone oxidoreductase chain 2 (MT-ND2) from Anas capensis (Cape teal).